The following is a 299-amino-acid chain: NAD(+) hydrolase PdTIR (299 aa).

The TIR domain maps to 164 to 297 (PPHDIFISHA…EIVADLMAII (134 aa)). Residues 173–174 (AW) and Arg203 each bind NAD(+). Glu239 is an active-site residue.

As to quaternary structure, homodimer. Interacts with host MYD88.

It catalyses the reaction NAD(+) + H2O = ADP-D-ribose + nicotinamide + H(+). NAD(+) hydrolase (NADase) that catalyzes cleavage of NAD(+) into ADP-D-ribose (ADPR) and nicotinamide. This chain is NAD(+) hydrolase PdTIR, found in Paracoccus denitrificans (strain Pd 1222).